A 490-amino-acid chain; its full sequence is B3 domain-containing protein LOC_Os12g40080 (490 aa).

A DNA-binding region (TF-B3 1) is located at residues 24-117; the sequence is GKSFIKVMIT…HFKVWIYDPS (94 aa). The disordered stretch occupies residues 161 to 191; that stretch reads SGHSKETSEINPANSPSWKPTERVPSSEELD. The span at 169-178 shows a compositional bias: polar residues; the sequence is EINPANSPSW. 2 DNA-binding regions (TF-B3) span residues 236–331 and 389–487; these read FYIT…FHPL and VAVM…IRKS.

It is found in the nucleus. The sequence is that of B3 domain-containing protein LOC_Os12g40080 from Oryza sativa subsp. japonica (Rice).